Reading from the N-terminus, the 196-residue chain is uncharacterized protein (196 aa).

The segment covering 21 to 35 has biased composition (basic and acidic residues); that stretch reads ESRRKDGSVRRERAV. 2 disordered regions span residues 21–53 and 65–196; these read ESRR…PGRG and LQLS…KEKE. Polar residues predominate over residues 66 to 75; that stretch reads QLSNDASTSK. Composition is skewed to basic and acidic residues over residues 84-94, 100-143, and 173-196; these read ELEKEKLERPL, EKND…KDFK, and KMSK…KEKE.

This is an uncharacterized protein from Schizosaccharomyces pombe (strain 972 / ATCC 24843) (Fission yeast).